The chain runs to 474 residues: Cysteine--tRNA ligase (474 aa).

Zn(2+) is bound at residue Cys30. The 'HIGH' region signature appears at 32–42; sequence PTVYNYAHIGN. Zn(2+)-binding residues include Cys215, His240, and Glu244. The short motif at 272-276 is the 'KMSKS' region element; sequence KMSKS. Residue Lys275 participates in ATP binding.

This sequence belongs to the class-I aminoacyl-tRNA synthetase family. Monomer. The cofactor is Zn(2+).

The protein localises to the cytoplasm. The catalysed reaction is tRNA(Cys) + L-cysteine + ATP = L-cysteinyl-tRNA(Cys) + AMP + diphosphate. This chain is Cysteine--tRNA ligase, found in Brachyspira hyodysenteriae (strain ATCC 49526 / WA1).